Reading from the N-terminus, the 38-residue chain is Trypsin inhibitor DE5 beta chain (38 aa).

It belongs to the protease inhibitor I3 (leguminous Kunitz-type inhibitor) family. Heterodimer of an alpha and a beta chain linked by a disulfide bond.

Functionally, inhibition of trypsin. This Adenanthera pavonina (Sandal bead tree) protein is Trypsin inhibitor DE5 beta chain.